Here is a 276-residue protein sequence, read N- to C-terminus: MDTYAVIGNPVAHSKSPFIHARFAQQTGRIIHYTALLAPLDRFEQTVLDFRKTGGKGMNITVPFKFEAFTLASRLTDRASAARAVNTFRFEETGEILGDNTDGVGLIRDIEVNLNFPLAGKRILLMGAGGAASGVILPLLQQQPDLLAIANRTPDKAVSLQRQFASYSNITTGHYHDFAGQHFDLIINATSASLHNELPPVPADLFRNAFAYDMLYSSRLTPFLELARVQGAGYLADGAGMLVEQAAESFLLWHGIRPETQTVIRQLRDNLRHPTS.

Shikimate contacts are provided by residues 14–16 and Thr-61; that span reads SKS. Residue Lys-65 is the Proton acceptor of the active site. Asp-77 serves as a coordination point for NADP(+). Residues Asn-86 and Asp-102 each contribute to the shikimate site. NADP(+) contacts are provided by residues 127–131, 151–156, and Met-214; these read GAGGA and NRTPDK. Tyr-216 is a shikimate binding site. Gly-238 is an NADP(+) binding site.

Belongs to the shikimate dehydrogenase family. As to quaternary structure, homodimer.

It carries out the reaction shikimate + NADP(+) = 3-dehydroshikimate + NADPH + H(+). The protein operates within metabolic intermediate biosynthesis; chorismate biosynthesis; chorismate from D-erythrose 4-phosphate and phosphoenolpyruvate: step 4/7. Functionally, involved in the biosynthesis of the chorismate, which leads to the biosynthesis of aromatic amino acids. Catalyzes the reversible NADPH linked reduction of 3-dehydroshikimate (DHSA) to yield shikimate (SA). The sequence is that of Shikimate dehydrogenase (NADP(+)) from Nitrosomonas europaea (strain ATCC 19718 / CIP 103999 / KCTC 2705 / NBRC 14298).